A 538-amino-acid chain; its full sequence is Putative cysteine ligase BshC (538 aa).

Residues 248–268 adopt a coiled-coil conformation; that stretch reads ISKYKEVQEGLRNQQEVIKEL.

It belongs to the BshC family.

In terms of biological role, involved in bacillithiol (BSH) biosynthesis. May catalyze the last step of the pathway, the addition of cysteine to glucosamine malate (GlcN-Mal) to generate BSH. This chain is Putative cysteine ligase BshC, found in Bacillus cereus (strain G9842).